The primary structure comprises 292 residues: tRNA pseudouridine synthase B (292 aa).

Residue D40 is the Nucleophile of the active site.

Belongs to the pseudouridine synthase TruB family. Type 1 subfamily.

It catalyses the reaction uridine(55) in tRNA = pseudouridine(55) in tRNA. Functionally, responsible for synthesis of pseudouridine from uracil-55 in the psi GC loop of transfer RNAs. The chain is tRNA pseudouridine synthase B from Mycoplasma mycoides subsp. mycoides SC (strain CCUG 32753 / NCTC 10114 / PG1).